Here is a 37-residue protein sequence, read N- to C-terminus: Large ribosomal subunit protein bL36A (37 aa).

Belongs to the bacterial ribosomal protein bL36 family.

The polypeptide is Large ribosomal subunit protein bL36A (Arthrobacter sp. (strain FB24)).